The chain runs to 233 residues: Probable septum site-determining protein MinC (233 aa).

The segment at 98-123 (LTEGKEKAPRPAPSEPTPPPPPVANQ) is disordered. The segment covering 107 to 120 (RPAPSEPTPPPPPV) has biased composition (pro residues).

Belongs to the MinC family. As to quaternary structure, interacts with MinD and FtsZ.

Cell division inhibitor that blocks the formation of polar Z ring septums. Rapidly oscillates between the poles of the cell to destabilize FtsZ filaments that have formed before they mature into polar Z rings. Prevents FtsZ polymerization. This chain is Probable septum site-determining protein MinC, found in Klebsiella pneumoniae (strain 342).